A 928-amino-acid chain; its full sequence is Nuclear pore complex-interacting protein family member B12 (928 aa).

A helical transmembrane segment spans residues 73–93 (VVITLWIVYLWVSLLKTIFWS). Disordered regions lie at residues 242–452 (RMGH…NIKT) and 663–928 (ERLR…RRLS). Polar residues predominate over residues 252 to 263 (QQHSITDNSLSL). The span at 349-359 (PLPPSAPPSAP) shows a compositional bias: pro residues. Composition is skewed to basic and acidic residues over residues 406–416 (DNIKTPAERLR), 698–708 (DNIKTPAERLR), 740–750 (DNIKTPAERLR), and 782–792 (DNIKTPAERLR).

This sequence belongs to the NPIP family.

It localises to the membrane. The protein is Nuclear pore complex-interacting protein family member B12 of Homo sapiens (Human).